Consider the following 308-residue polypeptide: D-alanine--D-alanine ligase B (308 aa).

The 201-residue stretch at 102-302 (KKVAAAAGVV…FAELLSWMVE (201 aa)) folds into the ATP-grasp domain. Position 128–183 (128–183 (PMKPPYVVKPVREGSSFGVVIVKEDQPHPPQVIGSADWKYGDEVMVEGYIAGRELT)) interacts with ATP. Residues Asp252, Glu269, and Asn271 each contribute to the Mg(2+) site.

This sequence belongs to the D-alanine--D-alanine ligase family. The cofactor is Mg(2+). Requires Mn(2+) as cofactor.

The protein resides in the cytoplasm. The catalysed reaction is 2 D-alanine + ATP = D-alanyl-D-alanine + ADP + phosphate + H(+). The protein operates within cell wall biogenesis; peptidoglycan biosynthesis. In terms of biological role, cell wall formation. This Brucella suis biovar 1 (strain 1330) protein is D-alanine--D-alanine ligase B.